The following is a 417-amino-acid chain: UDP-N-acetylglucosamine 1-carboxyvinyltransferase 3 (417 aa).

Position 22-23 (22-23 (KN)) interacts with phosphoenolpyruvate. Arginine 92 is a binding site for UDP-N-acetyl-alpha-D-glucosamine. Residue cysteine 116 is the Proton donor of the active site. Cysteine 116 bears the 2-(S-cysteinyl)pyruvic acid O-phosphothioketal mark. UDP-N-acetyl-alpha-D-glucosamine is bound by residues 121-125 (RPIDQ), aspartate 304, and isoleucine 326.

Belongs to the EPSP synthase family. MurA subfamily.

It localises to the cytoplasm. It catalyses the reaction phosphoenolpyruvate + UDP-N-acetyl-alpha-D-glucosamine = UDP-N-acetyl-3-O-(1-carboxyvinyl)-alpha-D-glucosamine + phosphate. It functions in the pathway cell wall biogenesis; peptidoglycan biosynthesis. Cell wall formation. Adds enolpyruvyl to UDP-N-acetylglucosamine. The polypeptide is UDP-N-acetylglucosamine 1-carboxyvinyltransferase 3 (Caldanaerobacter subterraneus subsp. tengcongensis (strain DSM 15242 / JCM 11007 / NBRC 100824 / MB4) (Thermoanaerobacter tengcongensis)).